We begin with the raw amino-acid sequence, 468 residues long: MKPVMALVGRANVGKSTLFNRLTRSRDALVADFAGLTRDRHYGNGKQGRHEYIVIDTGGFEPDVASGIYREMARQTQQAIAEADVVVFVVDVRAGVTAQDHDIAHYLRRAGKPCVLAANKAEGMQQDQGGKWAEFYELGLGTVHPVSAAHGQGIRSLVEMALEPLSPPDDGADAAARDLPDADGVDGVDGVDGADGRIIRLAVAGRPNVGKSTLINTWLGEERLVAFDTPGTTRDAITVPFERNGQRFELVDTAGLRRKGKVFAAVEKFSVVKTLQAIESAHVVLLLLDASQGVTEQDAHIAGYILESGRAVVLAVNKWDATDDYQRQLLERSIETRLAFLKFASLHRISAKKRQGLGPLWTAIVQAHKAATCKMSTPVLTRLLLEAVQFQSPQRQGLFRPKMRYAHQGGMNPPVIVIHGNGLEHVTDTYKRFLEGRFRKEFDLVGTPLRIELKTSHNPYVDEGRGGR.

EngA-type G domains are found at residues 3–169 (PVMA…SPPD) and 199–372 (IRLA…KAAT). GTP-binding positions include 9-16 (GRANVGKS), 56-60 (DTGGF), 119-122 (NKAE), 205-212 (GRPNVGKS), 252-256 (DTAGL), and 317-320 (NKWD). The KH-like domain maps to 373-457 (CKMSTPVLTR…PLRIELKTSH (85 aa)).

The protein belongs to the TRAFAC class TrmE-Era-EngA-EngB-Septin-like GTPase superfamily. EngA (Der) GTPase family. In terms of assembly, associates with the 50S ribosomal subunit.

In terms of biological role, GTPase that plays an essential role in the late steps of ribosome biogenesis. The polypeptide is GTPase Der (Verminephrobacter eiseniae (strain EF01-2)).